The sequence spans 685 residues: Glycine--tRNA ligase beta subunit (685 aa).

The interval 58-77 (GLTAQSPTTREERKGPRTDA) is disordered. Basic and acidic residues predominate over residues 66 to 77 (TREERKGPRTDA).

This sequence belongs to the class-II aminoacyl-tRNA synthetase family. In terms of assembly, tetramer of two alpha and two beta subunits.

Its subcellular location is the cytoplasm. The catalysed reaction is tRNA(Gly) + glycine + ATP = glycyl-tRNA(Gly) + AMP + diphosphate. The chain is Glycine--tRNA ligase beta subunit from Paracoccus denitrificans (strain Pd 1222).